A 758-amino-acid chain; its full sequence is Spastin (758 aa).

The disordered stretch occupies residues 1-103; that stretch reads MVRTKNQSSS…SPRSGHHHSY (103 aa). The Cytoplasmic portion of the chain corresponds to 1–121; that stretch reads MVRTKNQSSS…KQNLYVVSFP (121 aa). An interaction with atl region spans residues 1–159; it reads MVRTKNQSSS…VIYRPHRRDC (159 aa). The tract at residues 1 to 210 is required for localization to punctate cytoplasmic foci; it reads MVRTKNQSSS…RPIQPLEMAA (210 aa). Composition is skewed to low complexity over residues 8–28, 43–58, 66–76, and 85–95; these read SSSS…SSGA, RSSS…AGGS, SSNRRSPGSSP, and TDDLTPTTCSP. The segment at residues 122 to 142 is an intramembrane region (helical); sequence IIFLFNVLRSLIYQLFCIFRY. Over 143 to 758 the chain is Cytoplasmic; that stretch reads LYGASTKVIY…WSQDYGDITI (616 aa). Composition is skewed to polar residues over residues 169–180 and 189–198; these read SKEQQQSLNHPS and QEQQLSNQPQ. A disordered region spans residues 169-202; it reads SKEQQQSLNHPSELNREGDGQEQQLSNQPQRFRP. Residues 208-758 form a sufficient for interaction with microtubules and microtubule severing region; that stretch reads MAANRPGGGY…WSQDYGDITI (551 aa). Residues 233 to 308 form the MIT domain; that stretch reads HRRAFEYISK…SMARDRLHFL (76 aa). The tract at residues 353–454 is disordered; the sequence is RVRSSGYGPK…GPSGSGASTP (102 aa). 2 stretches are compositionally biased toward polar residues: residues 390-406 and 425-454; these read NKSQ…TSVG and QFSS…ASTP. Residue Thr439 is modified to Phosphothreonine. The required for interaction with microtubules stretch occupies residues 443 to 455; the sequence is NNGPSGSGASTPV. Position 523–530 (523–530) interacts with ATP; the sequence is GPPGNGKT.

It belongs to the AAA ATPase family. Spastin subfamily. As to quaternary structure, homohexamer. The homohexamer is stabilized by ATP-binding. The homohexamer may adopt a ring conformation through which microtubules pass prior to being severed. Interacts with microtubules. Interacts with atl; may be involved in microtubule dynamics.

It localises to the membrane. It is found in the cytoplasm. The protein resides in the cytoskeleton. Its subcellular location is the microtubule organizing center. The protein localises to the centrosome. It localises to the chromosome. It is found in the lipid droplet. The enzyme catalyses n ATP + n H2O + a microtubule = n ADP + n phosphate + (n+1) alpha/beta tubulin heterodimers.. Functionally, ATP-dependent microtubule severing protein. Stimulates microtubule minus-end depolymerization and poleward microtubule flux in the mitotic spindle. Regulates microtubule stability in the neuromuscular junction synapse. Involved in lipid metabolism by regulating the size and distribution of lipid droplets. Involved in axon regeneration by regulating microtubule severing. This chain is Spastin, found in Drosophila melanogaster (Fruit fly).